The chain runs to 280 residues: 4-diphosphocytidyl-2-C-methyl-D-erythritol kinase (280 aa).

The active site involves lysine 8. 91-101 (PVAAGLAGGST) is a binding site for ATP. The active site involves aspartate 133.

The protein belongs to the GHMP kinase family. IspE subfamily.

The catalysed reaction is 4-CDP-2-C-methyl-D-erythritol + ATP = 4-CDP-2-C-methyl-D-erythritol 2-phosphate + ADP + H(+). It participates in isoprenoid biosynthesis; isopentenyl diphosphate biosynthesis via DXP pathway; isopentenyl diphosphate from 1-deoxy-D-xylulose 5-phosphate: step 3/6. Catalyzes the phosphorylation of the position 2 hydroxy group of 4-diphosphocytidyl-2C-methyl-D-erythritol. This Clostridium botulinum (strain 657 / Type Ba4) protein is 4-diphosphocytidyl-2-C-methyl-D-erythritol kinase.